A 173-amino-acid chain; its full sequence is Alpha-crystallin B chain (173 aa).

The residue at position 1 (methionine 1) is an N-acetylmethionine. Residues 54–162 enclose the sHSP domain; the sequence is RLPSWIESGL…PERSIPITRE (109 aa). Zn(2+)-binding residues include histidine 81, histidine 102, glutamate 104, and histidine 109.

It belongs to the small heat shock protein (HSP20) family. As to quaternary structure, heteromer composed of three CRYAA and one CRYAB subunits. Aggregates with homologous proteins, including the small heat shock protein HSPB1, to form large heteromeric complexes. Inter-subunit bridging via zinc ions enhances stability, which is crucial as there is no protein turn over in the lens.

In terms of biological role, may contribute to the transparency and refractive index of the lens. This chain is Alpha-crystallin B chain (CRYAB), found in Aquarana catesbeiana (American bullfrog).